The sequence spans 632 residues: Probable potassium transport system protein Kup 3 (632 aa).

Helical transmembrane passes span 17-37 (LFYL…TSPL), 60-80 (LISL…VLFL), 106-126 (TAIL…DAMI), 144-164 (PSLS…LFVV), 175-195 (FFGP…ISHI), 210-230 (AVSF…AVFL), 254-274 (WFLL…ALVL), 292-312 (ALLP…QAVI), 344-364 (IFVP…VLSF), 370-390 (LATA…IMAF), 401-421 (LPLA…FLGA), and 426-446 (IHDG…IMWT).

This sequence belongs to the HAK/KUP transporter (TC 2.A.72) family.

Its subcellular location is the cell inner membrane. The enzyme catalyses K(+)(in) + H(+)(in) = K(+)(out) + H(+)(out). Functionally, transport of potassium into the cell. Likely operates as a K(+):H(+) symporter. This Rhizobium etli (strain ATCC 51251 / DSM 11541 / JCM 21823 / NBRC 15573 / CFN 42) protein is Probable potassium transport system protein Kup 3.